The sequence spans 586 residues: Protein cereblon (586 aa).

Disordered stretches follow at residues 1–114 (MDDE…LPRW) and 158–194 (SQER…IDIG). A compositionally biased stretch (basic and acidic residues) spans 14-37 (GRDEDVQLEDHSQAQGLQDRRVDA). Residues 75 to 85 (MVEDGLQDDTA) are compositionally biased toward acidic residues. Residues 86–96 (SEGSHPSSDMS) show a composition bias toward polar residues. Residues 159 to 168 (QERRRSRTSE) are compositionally biased toward basic and acidic residues. Acidic residues predominate over residues 170–179 (TSQEDVEQPE). The span at 180 to 190 (DPPPQQPPRPP) shows a compositional bias: pro residues. The 227-residue stretch at 226–452 (HMLIFLHQHI…LIKSTFTDES (227 aa)) folds into the Lon N-terminal domain. A CULT domain is found at 451-560 (ESLFFCRYCN…LAGSSVRIGK (110 aa)). Zn(2+) contacts are provided by C456, C459, C525, and C528.

The protein belongs to the CRBN family. Likely a component of a DCX (DDB1-CUL4-X-box) protein ligase complex. May interact with pic/DDB1. Post-translationally, ubiquitinated.

The protein resides in the nucleus. It functions in the pathway protein modification; protein ubiquitination. Functionally, substrate recognition component of a DCX (DDB1-CUL4-X-box) E3 protein ligase complex that mediates the ubiquitination and subsequent proteasomal degradation of target proteins. Has an essential role in mediating growth by negatively regulating insulin signaling. It also has a role in maintaining presynaptic function in the neuromuscular junction synapses of third-instar larvae. The polypeptide is Protein cereblon (Drosophila erecta (Fruit fly)).